Reading from the N-terminus, the 311-residue chain is Ferritin-like catalase Nec2 (311 aa).

Residues 1–25 (MAFLSNMAMFITMLMFSSMMHPCFS) form the signal peptide. 3 N-linked (GlcNAc...) asparagine glycosylation sites follow: asparagine 128, asparagine 257, and asparagine 289.

Forms homomultimers. Observed in all flowers organs; mainly expressed in nectaries and, to a lower extent, in petals and ovules, as well as in stigmas and calyx at low levels.

The catalysed reaction is 2 H2O2 = O2 + 2 H2O. Its function is as follows. Involved in the production of blood-red nectar containing the alkaloid nesocodin and that serves as a visual attractant for pollinator visitation, including vertebrates such as Phelsuma geckos. The nectar is initially acidic and pale yellow, but slowly becomes alkaline before turning into red within 24 hours. Together with NEC1 and NEC3, facilitates the condensation of sinapaldehyde ((E)-3,5-dimethoxy-4-hydroxycinnamaldehyde) and proline to form nesocodin, a pigment with a stable imine bond. Protects nesocodin from degradation by hydrogen peroxide H(2)O(2) by catalyzing the degradation of H(2)O(2) into water H(2)O and dioxygene O(2). The protein is Ferritin-like catalase Nec2 of Nesocodon mauritianus (Blue Mauritius bellflower).